Reading from the N-terminus, the 266-residue chain is Norfluorocurarine synthase 1 (266 aa).

The 111-residue stretch at 11–121 (HFVLVHGAGH…VMPDAVNPPS (111 aa)) folds into the AB hydrolase-1 domain. Active-site residues include S86, D216, and H244.

It belongs to the AB hydrolase superfamily. Homodimer.

The enzyme catalyses 17-dehydropreakuammicine + H2O = norfluorocurarine + methanol + CO2. Its pathway is alkaloid biosynthesis. Functionally, hydrolase involved in the biosynthesis of curare monoterpene indole alkaloids (MIAs), natural products such as diaboline, a pharmacologically active compound used to regulate blood pressure. Curare alkaloids act as animal glycine receptor antagonists. Catalyzes the conversion of dehydropreakuammicine to norfluorocurarine. In Strychnos sp, this protein is Norfluorocurarine synthase 1.